Reading from the N-terminus, the 476-residue chain is Bifunctional protein HldE (476 aa).

A ribokinase region spans residues 1-319 (MKVSLPAFEK…RALSVNHGES (319 aa)). Residue 195-198 (NMGE) participates in ATP binding. Aspartate 264 is an active-site residue. A cytidylyltransferase region spans residues 345-476 (MTNGCFDILH…SIIENIMANQ (132 aa)).

In the N-terminal section; belongs to the carbohydrate kinase PfkB family. The protein in the C-terminal section; belongs to the cytidylyltransferase family. In terms of assembly, homodimer.

It catalyses the reaction D-glycero-beta-D-manno-heptose 7-phosphate + ATP = D-glycero-beta-D-manno-heptose 1,7-bisphosphate + ADP + H(+). The enzyme catalyses D-glycero-beta-D-manno-heptose 1-phosphate + ATP + H(+) = ADP-D-glycero-beta-D-manno-heptose + diphosphate. It participates in nucleotide-sugar biosynthesis; ADP-L-glycero-beta-D-manno-heptose biosynthesis; ADP-L-glycero-beta-D-manno-heptose from D-glycero-beta-D-manno-heptose 7-phosphate: step 1/4. Its pathway is nucleotide-sugar biosynthesis; ADP-L-glycero-beta-D-manno-heptose biosynthesis; ADP-L-glycero-beta-D-manno-heptose from D-glycero-beta-D-manno-heptose 7-phosphate: step 3/4. In terms of biological role, catalyzes the phosphorylation of D-glycero-D-manno-heptose 7-phosphate at the C-1 position to selectively form D-glycero-beta-D-manno-heptose-1,7-bisphosphate. Functionally, catalyzes the ADP transfer from ATP to D-glycero-beta-D-manno-heptose 1-phosphate, yielding ADP-D-glycero-beta-D-manno-heptose. The protein is Bifunctional protein HldE of Shewanella sediminis (strain HAW-EB3).